The following is a 1109-amino-acid chain: Pesticidal crystal protein Cry28Aa (1109 aa).

The protein belongs to the delta endotoxin family.

Promotes colloidosmotic lysis by binding to the midgut epithelial cells of insects. The polypeptide is Pesticidal crystal protein Cry28Aa (cry28Aa) (Bacillus thuringiensis subsp. finitimus).